The sequence spans 175 residues: Ribosome maturation factor RimM (175 aa).

Residues 97-170 (NGQYYWTDVL…YLYVDWQMAW (74 aa)) enclose the PRC barrel domain.

This sequence belongs to the RimM family. As to quaternary structure, binds ribosomal protein uS19.

It localises to the cytoplasm. Its function is as follows. An accessory protein needed during the final step in the assembly of 30S ribosomal subunit, possibly for assembly of the head region. Essential for efficient processing of 16S rRNA. May be needed both before and after RbfA during the maturation of 16S rRNA. It has affinity for free ribosomal 30S subunits but not for 70S ribosomes. This chain is Ribosome maturation factor RimM, found in Dichelobacter nodosus (strain VCS1703A).